The following is a 776-amino-acid chain: Disintegrin and metalloproteinase domain-containing protein 28 (776 aa).

The signal sequence occupies residues 1 to 19; sequence MLQALLTVSLLLSPVPVSA. A propeptide spanning residues 20-193 is cleaved from the precursor; sequence IKELPGVKKY…IARPATRLVK (174 aa). Residues 168 to 175 carry the Cysteine switch motif; sequence STCGTDGV. Cysteine 170 contacts Zn(2+). Residues 194-666 lie on the Extracellular side of the membrane; sequence LNDGKVQKHE…CDDSSVVFYF (473 aa). One can recognise a Peptidase M12B domain in the interval 204-400; it reads KYIEYYLVLD…KLSNCLFNAP (197 aa). Asparagine 268 and asparagine 275 each carry an N-linked (GlcNAc...) asparagine glycan. Disulfide bonds link cysteine 315-cysteine 395, cysteine 355-cysteine 379, cysteine 357-cysteine 362, and cysteine 466-cysteine 486. Histidine 340 contacts Zn(2+). Residue glutamate 341 is part of the active site. Zn(2+) contacts are provided by histidine 344 and histidine 350. Asparagine 352 is a glycosylation site (N-linked (GlcNAc...) asparagine). One can recognise a Disintegrin domain in the interval 408-494; that stretch reads TPICGNQMVE…NCPDDRFRAN (87 aa). Asparagine 558, asparagine 603, and asparagine 629 each carry an N-linked (GlcNAc...) asparagine glycan. One can recognise an EGF-like domain in the interval 626–658; that stretch reads KSTNCSSKCKGHAVCDHELQCQCEEGWSPPDCD. Disulfide bonds link cysteine 630–cysteine 640, cysteine 634–cysteine 646, and cysteine 648–cysteine 657. Residues 667-687 form a helical membrane-spanning segment; it reads SIVVAVLFPVAVISLVVAIVI. Over 688-776 the chain is Cytoplasmic; sequence RQQSSREKQK…SSFLDSNPKA (89 aa). The span at 691-701 shows a compositional bias: basic and acidic residues; it reads SSREKQKKDQR. Disordered stretches follow at residues 691 to 728 and 746 to 776; these read SSRE…PQEM and PASF…NPKA. The segment covering 709 to 718 has biased composition (basic residues); sequence RPHKQKRKPQ.

Zn(2+) serves as cofactor. Post-translationally, pro-domain removal and maturation may be, at least in part, autocatalytic. Expressed at high levels in epididymis and at lower levels in lung.

Its subcellular location is the membrane. In terms of biological role, may play a role in the adhesive and proteolytic events that occur during lymphocyte emigration or may function in ectodomain shedding of lymphocyte surface target proteins, such as FASL and CD40L. May be involved in sperm maturation. The polypeptide is Disintegrin and metalloproteinase domain-containing protein 28 (ADAM28) (Macaca fascicularis (Crab-eating macaque)).